Here is a 115-residue protein sequence, read N- to C-terminus: NAD(P)H-quinone oxidoreductase subunit M, organellar chromatophore (115 aa).

The protein belongs to the complex I NdhM subunit family. As to quaternary structure, NDH-1 can be composed of about 15 different subunits; different subcomplexes with different compositions have been identified which probably have different functions.

Its subcellular location is the plastid. The protein resides in the organellar chromatophore thylakoid membrane. It catalyses the reaction a plastoquinone + NADH + (n+1) H(+)(in) = a plastoquinol + NAD(+) + n H(+)(out). The catalysed reaction is a plastoquinone + NADPH + (n+1) H(+)(in) = a plastoquinol + NADP(+) + n H(+)(out). NDH-1 shuttles electrons from an unknown electron donor, via FMN and iron-sulfur (Fe-S) centers, to quinones in the respiratory and/or the photosynthetic chain. The immediate electron acceptor for the enzyme in this species is believed to be plastoquinone. Couples the redox reaction to proton translocation, and thus conserves the redox energy in a proton gradient. This Paulinella chromatophora protein is NAD(P)H-quinone oxidoreductase subunit M, organellar chromatophore.